A 390-amino-acid chain; its full sequence is Putative 8-amino-7-oxononanoate synthase (390 aa).

Arginine 20 serves as a coordination point for substrate. Glycine 107–tyrosine 108 contacts pyridoxal 5'-phosphate. Histidine 132 contacts substrate. Pyridoxal 5'-phosphate is bound by residues serine 181, aspartate 206–histidine 209, and threonine 237–lysine 240. Lysine 240 is subject to N6-(pyridoxal phosphate)lysine. A substrate-binding site is contributed by threonine 356.

Belongs to the class-II pyridoxal-phosphate-dependent aminotransferase family. BioF subfamily. As to quaternary structure, homodimer. Pyridoxal 5'-phosphate is required as a cofactor.

It catalyses the reaction 6-carboxyhexanoyl-[ACP] + L-alanine + H(+) = (8S)-8-amino-7-oxononanoate + holo-[ACP] + CO2. The protein operates within cofactor biosynthesis; biotin biosynthesis. Catalyzes the decarboxylative condensation of pimeloyl-[acyl-carrier protein] and L-alanine to produce 8-amino-7-oxononanoate (AON), [acyl-carrier protein], and carbon dioxide. The polypeptide is Putative 8-amino-7-oxononanoate synthase (bioF) (Syntrophotalea carbinolica (strain DSM 2380 / NBRC 103641 / GraBd1) (Pelobacter carbinolicus)).